The sequence spans 62 residues: Defensin BmKDfsin3 (62 aa).

The N-terminal stretch at 1-24 (MKTIVILFVLALVFCTLEMGMVEA) is a signal peptide. Cystine bridges form between cysteine 28–cysteine 49, cysteine 35–cysteine 57, and cysteine 39–cysteine 59.

This sequence belongs to the invertebrate defensin family. Type 2 subfamily. Low expression in both venom and non-venom glands (hemolymph).

It localises to the secreted. Functionally, antibacterial peptide active against Gram-positive bacteria (including S.aureus ATCC25923 (MIC=2.5 uM), M.luteus AB93113 (MIC=2.5 uM), and the antibiotic-resistant S.epidermidis PRSE P1389 (MIC=1.25 uM)), but not against Gram-negative bacteria (including E.coli and P.aeruginosa). Also blocks the currents of Kv1.1/KCNA1 (57% inhibition), Kv1.2/KCNA2 (27.5% inhibition), Kv1.3/KCNA3 (IC(50)=23.4 nM, 84.3% inhibition), KCa3.1/KCNN4/IK (15% inhibition), KCa2.3/KCNN3/SK3 (87.5% inhibition) and Kv11.1/KCNH2/ERG1 (30.4% inhibition) channels (tested at 1 uM). It inhibits potassium channel current by interacting with the pore region. This is Defensin BmKDfsin3 from Olivierus martensii (Manchurian scorpion).